The chain runs to 345 residues: Protease HtpX homolog (345 aa).

Helical transmembrane passes span 6-26 (TAML…LVGG) and 27-47 (SNGM…SYWN). Zn(2+) is bound at residue histidine 130. Glutamate 131 is a catalytic residue. Histidine 134 is a binding site for Zn(2+). A run of 2 helical transmembrane segments spans residues 145–165 (LTAT…FMGG) and 179–199 (IGGL…QMAI). Residue glutamate 204 coordinates Zn(2+).

The protein belongs to the peptidase M48B family. Zn(2+) serves as cofactor.

The protein resides in the cell inner membrane. This Bartonella henselae (strain ATCC 49882 / DSM 28221 / CCUG 30454 / Houston 1) (Rochalimaea henselae) protein is Protease HtpX homolog.